The primary structure comprises 301 residues: Indole-3-glycerol phosphate synthase (301 aa).

The protein belongs to the TrpC family.

It catalyses the reaction 1-(2-carboxyphenylamino)-1-deoxy-D-ribulose 5-phosphate + H(+) = (1S,2R)-1-C-(indol-3-yl)glycerol 3-phosphate + CO2 + H2O. The protein operates within amino-acid biosynthesis; L-tryptophan biosynthesis; L-tryptophan from chorismate: step 4/5. In Prochlorococcus marinus (strain MIT 9313), this protein is Indole-3-glycerol phosphate synthase.